A 226-amino-acid polypeptide reads, in one-letter code: PKHD-type hydroxylase HNE_2117 (226 aa).

The 101-residue stretch at 78–178 (TVLTPRFNRY…RLASFLWTQS (101 aa)) folds into the Fe2OG dioxygenase domain. Fe cation-binding residues include H96, D98, and H159. R169 contributes to the 2-oxoglutarate binding site.

Requires Fe(2+) as cofactor. The cofactor is L-ascorbate.

This is PKHD-type hydroxylase HNE_2117 from Hyphomonas neptunium (strain ATCC 15444).